Here is a 587-residue protein sequence, read N- to C-terminus: Protein FRIGIDA-ESSENTIAL 1 (587 aa).

The segment at 96–123 (KRAALPCKFFAKGWCFNGVSCKFLHVKE) adopts a C3H1-type zinc-finger fold. Disordered regions lie at residues 264-346 (DMGS…SFTI), 368-421 (GDRP…HQET), and 467-492 (IKPA…SDEI). A compositionally biased stretch (low complexity) spans 294-304 (NGNSLSGSGSL). Positions 470–479 (AGHDSWHRSD) are enriched in basic and acidic residues.

As to quaternary structure, component of the transcription activator complex FRI-C composed of FRI, FRL1, SUF4, FLX and FES1. Interacts with FLX, (via C-terminus) with FRI (via C-terminus), and with RIN1, a component of the SWR1 chromatin-remodeling complex. In terms of tissue distribution, expressed in root and shoot apices and vasculature.

It localises to the nucleus. In terms of biological role, transcriptional activator involved in the FRIGIDA-mediated vernalization pathway, but not in the autonomous flowering pathway. Acts cooperatively with FRI (FRIGIDA) or FRL1 (FRIGIDA-LIKE 1) to promote FLC (FLOWERING LOCUS C) expression. Required for the stabilization of the FRI-C complex. In Arabidopsis thaliana (Mouse-ear cress), this protein is Protein FRIGIDA-ESSENTIAL 1 (FES1).